A 388-amino-acid polypeptide reads, in one-letter code: Dual-specificity RNA methyltransferase RlmN (388 aa).

Residue glutamate 109 is the Proton acceptor of the active site. Residues glutamate 115–aspartate 354 enclose the Radical SAM core domain. A disulfide bridge links cysteine 122 with cysteine 359. The [4Fe-4S] cluster site is built by cysteine 129, cysteine 133, and cysteine 136. S-adenosyl-L-methionine contacts are provided by residues glycine 183–glutamate 184, serine 215, serine 237–histidine 239, and asparagine 316. Cysteine 359 acts as the S-methylcysteine intermediate in catalysis.

This sequence belongs to the radical SAM superfamily. RlmN family. [4Fe-4S] cluster serves as cofactor.

It localises to the cytoplasm. The enzyme catalyses adenosine(2503) in 23S rRNA + 2 reduced [2Fe-2S]-[ferredoxin] + 2 S-adenosyl-L-methionine = 2-methyladenosine(2503) in 23S rRNA + 5'-deoxyadenosine + L-methionine + 2 oxidized [2Fe-2S]-[ferredoxin] + S-adenosyl-L-homocysteine. It catalyses the reaction adenosine(37) in tRNA + 2 reduced [2Fe-2S]-[ferredoxin] + 2 S-adenosyl-L-methionine = 2-methyladenosine(37) in tRNA + 5'-deoxyadenosine + L-methionine + 2 oxidized [2Fe-2S]-[ferredoxin] + S-adenosyl-L-homocysteine. Functionally, specifically methylates position 2 of adenine 2503 in 23S rRNA and position 2 of adenine 37 in tRNAs. m2A2503 modification seems to play a crucial role in the proofreading step occurring at the peptidyl transferase center and thus would serve to optimize ribosomal fidelity. The chain is Dual-specificity RNA methyltransferase RlmN from Cronobacter sakazakii (strain ATCC BAA-894) (Enterobacter sakazakii).